Here is a 340-residue protein sequence, read N- to C-terminus: Cobalt-precorrin-5B C(1)-methyltransferase (340 aa).

The protein belongs to the CbiD family.

It carries out the reaction Co-precorrin-5B + S-adenosyl-L-methionine = Co-precorrin-6A + S-adenosyl-L-homocysteine. Its pathway is cofactor biosynthesis; adenosylcobalamin biosynthesis; cob(II)yrinate a,c-diamide from sirohydrochlorin (anaerobic route): step 6/10. Functionally, catalyzes the methylation of C-1 in cobalt-precorrin-5B to form cobalt-precorrin-6A. The sequence is that of Cobalt-precorrin-5B C(1)-methyltransferase from Methanococcoides burtonii (strain DSM 6242 / NBRC 107633 / OCM 468 / ACE-M).